Consider the following 201-residue polypeptide: Small ribosomal subunit protein uS4 (201 aa).

The disordered stretch occupies residues 1-42; it reads MARYTGPVTRKSRRLGTDLVGGDQSFEKRPYPPGQHGRARIK. One can recognise an S4 RNA-binding domain in the interval 91–157; sequence SRLDNVVYRA…VPFQIARETA (67 aa).

It belongs to the universal ribosomal protein uS4 family. In terms of assembly, part of the 30S ribosomal subunit. Contacts protein S5. The interaction surface between S4 and S5 is involved in control of translational fidelity.

Its function is as follows. One of the primary rRNA binding proteins, it binds directly to 16S rRNA where it nucleates assembly of the body of the 30S subunit. In terms of biological role, with S5 and S12 plays an important role in translational accuracy. The protein is Small ribosomal subunit protein uS4 of Mycobacterium ulcerans (strain Agy99).